The chain runs to 78 residues: MMSKLGVLLTICLLLFPLFALPQDGDQPADRPAERMQDDISSEQNPLLEKRVGERCCKNGKRGCGRWCRDHSRCCGRR.

The N-terminal stretch at 1–22 (MMSKLGVLLTICLLLFPLFALP) is a signal peptide. Residues 23-51 (QDGDQPADRPAERMQDDISSEQNPLLEKR) constitute a propeptide that is removed on maturation. Residues 26 to 46 (DQPADRPAERMQDDISSEQNP) are disordered. A compositionally biased stretch (basic and acidic residues) spans 28–38 (PADRPAERMQD). Disulfide bonds link Cys56/Cys68, Cys57/Cys74, and Cys64/Cys75. Cys75 carries the cysteine amide modification.

It belongs to the conotoxin M superfamily. As to expression, expressed by the venom duct.

It localises to the secreted. Mu-conotoxins block voltage-gated sodium channels (Nav). This synthetic toxin potently blocks rNav1.4/SCN4A (Kd=0.34-3.6 nM), rNav1.2/SCN2A (Kd=13 nM), rNav1.3/SCN3A (Kd=200 nM), rNav1.1/SCN1A (Kd=360 nM), mNav1.6/SCN8A (IC(50)=1.8 uM), rNav1.5/SCN5A (IC(50)=9 uM), rNav1.6/SCN8A (IC(50)&gt;30 uM). It is noteworthy that the toxin is 50-fold more potent on mouse Nav1.6 than on rat Nav1.6. The block of SCN4A is very slowly reversible. This Conus bullatus (Bubble cone) protein is Mu-conotoxin BuIIIB.